The primary structure comprises 134 residues: Methylglyoxal synthase (134 aa).

The MGS-like domain occupies 1 to 134; that stretch reads MHIALIAHDE…DWRDLRRNDE (134 aa). Substrate contacts are provided by residues His-8, Lys-12, 34-37, and 54-55; these read TGTT and SG. Asp-60 (proton donor/acceptor) is an active-site residue. Residue His-87 coordinates substrate.

The protein belongs to the methylglyoxal synthase family.

It catalyses the reaction dihydroxyacetone phosphate = methylglyoxal + phosphate. In terms of biological role, catalyzes the formation of methylglyoxal from dihydroxyacetone phosphate. This is Methylglyoxal synthase from Listeria monocytogenes serotype 4b (strain CLIP80459).